The following is a 156-amino-acid chain: Small ribosomal subunit protein uS7 (156 aa).

Belongs to the universal ribosomal protein uS7 family. In terms of assembly, part of the 30S ribosomal subunit. Contacts proteins S9 and S11.

Functionally, one of the primary rRNA binding proteins, it binds directly to 16S rRNA where it nucleates assembly of the head domain of the 30S subunit. Is located at the subunit interface close to the decoding center, probably blocks exit of the E-site tRNA. The sequence is that of Small ribosomal subunit protein uS7 from Parafrankia sp. (strain EAN1pec).